A 309-amino-acid chain; its full sequence is Probable manganese-dependent inorganic pyrophosphatase (309 aa).

Histidine 9, aspartate 13, aspartate 15, aspartate 75, histidine 97, and aspartate 149 together coordinate Mn(2+).

It belongs to the PPase class C family. Requires Mn(2+) as cofactor.

It localises to the cytoplasm. The enzyme catalyses diphosphate + H2O = 2 phosphate + H(+). This chain is Probable manganese-dependent inorganic pyrophosphatase, found in Bacillus licheniformis (strain ATCC 14580 / DSM 13 / JCM 2505 / CCUG 7422 / NBRC 12200 / NCIMB 9375 / NCTC 10341 / NRRL NRS-1264 / Gibson 46).